Here is a 457-residue protein sequence, read N- to C-terminus: MVRLYNTLTKKKELFTPIDKDHVKMYVCGPTVYDTAHIGNARSVVVYDVLFQLLKFCYGKVTYVRNITDIDDKIINAASEKNSNIESISTYYTKAFHEDMRSINCAEPTHEPKATKNVDYIIKLIEHLLQSGHAYESDKHVYFNIESYHEYGALSGKKTDELVPGSRVEVNENKKHPGDFVLWKPANDIDYKLSSYWNSPWGEGRPGWHIECSAMSYAYLGKDFDIHGGGIDLQFPHHENEIAQSKSAFAGSMFAKYWIHNGFLTVNEEKMSKSLFNIVKVRDLLDSGIKGEVIRYALLKTHYRKPLDWTENVISDAQETLNKFYRLSRGLDTINIDESNAEISKDFIDALKNDLNIPEALAILHEMAAKINKMSNESEKLKLTESFVKSARFIGLLESSYEKWFAVDVNHQEIERLIDLRKIAKKNKNYDTADKIRDQLKQMGITISDNEDGTTTW.

Cys-28 is a Zn(2+) binding site. The short motif at 30–40 is the 'HIGH' region element; it reads PTVYDTAHIGN. Zn(2+)-binding residues include Cys-212, His-237, and Glu-241. Residues 270–274 carry the 'KMSKS' region motif; that stretch reads KMSKS. Residue Lys-273 coordinates ATP.

It belongs to the class-I aminoacyl-tRNA synthetase family. In terms of assembly, monomer. The cofactor is Zn(2+).

The protein localises to the cytoplasm. It carries out the reaction tRNA(Cys) + L-cysteine + ATP = L-cysteinyl-tRNA(Cys) + AMP + diphosphate. The polypeptide is Cysteine--tRNA ligase (Wolbachia pipientis wMel).